The sequence spans 424 residues: Na(+), Li(+), K(+)/H(+) antiporter (424 aa).

12 helical membrane-spanning segments follow: residues 15–35, 42–62, 74–94, 105–125, 141–161, 165–185, 227–247, 274–294, 305–325, 327–347, 367–389, and 393–415; these read VGEF…AIYF, GLAG…NLFG, MLVS…LANS, VAFT…QAMI, FYTT…VLFF, FELL…LRFY, LLFV…DLVI, TSFG…TVVI, WVFF…PMTS, FWIF…VVGL, AASL…TAWF, and WTFI…MFHL.

It belongs to the major facilitator superfamily.

Its subcellular location is the cell membrane. Its activity is regulated as follows. Norfloxacin transport is inhibited by CCCP. Exhibits dual functions as a Na(+)(Li(+)/K(+))/H(+) antiporter and a multidrug efflux pump. Catalyzes the efflux of Na(+), Li(+) and K(+) in exchange for external protons. Shows a preference for Na(+), followed by K(+) and Li(+). Can also function as a multidrug efflux pump. Transports ethidium bromide and norfloxacin. In Planococcus maritimus, this protein is Na(+), Li(+), K(+)/H(+) antiporter.